The chain runs to 110 residues: MANQTNSGNERVDLAYRRRKNAEEMRHQMIAFVLMILLTLIAFAAVGYEEFSHWFVVPFILLLAAVQVAFQLYYFMHMSHKGHEFPAMFIYGGVAVMLLLVWAFTTVVWW.

The next 3 helical transmembrane spans lie at 29-49, 55-75, and 89-109; these read MIAF…VGYE, FVVP…LYYF, and FIYG…TVVW.

This sequence belongs to the cytochrome c oxidase bacterial subunit 4 family.

The protein localises to the cell membrane. It carries out the reaction 4 Fe(II)-[cytochrome c] + O2 + 8 H(+)(in) = 4 Fe(III)-[cytochrome c] + 2 H2O + 4 H(+)(out). In Bacillus sp. (strain PS3), this protein is Cytochrome c oxidase subunit 4B (caaD).